The sequence spans 51 residues: Large ribosomal subunit protein bL33 (51 aa).

The protein belongs to the bacterial ribosomal protein bL33 family.

The polypeptide is Large ribosomal subunit protein bL33 (Pseudomonas putida (strain ATCC 47054 / DSM 6125 / CFBP 8728 / NCIMB 11950 / KT2440)).